A 105-amino-acid polypeptide reads, in one-letter code: Large ribosomal subunit protein uL24 (105 aa).

This sequence belongs to the universal ribosomal protein uL24 family. In terms of assembly, part of the 50S ribosomal subunit.

In terms of biological role, one of two assembly initiator proteins, it binds directly to the 5'-end of the 23S rRNA, where it nucleates assembly of the 50S subunit. Functionally, one of the proteins that surrounds the polypeptide exit tunnel on the outside of the subunit. This is Large ribosomal subunit protein uL24 from Nitrosomonas europaea (strain ATCC 19718 / CIP 103999 / KCTC 2705 / NBRC 14298).